The chain runs to 284 residues: NADH-cytochrome b5 reductase 1 (284 aa).

Residues 8-28 (PLVIFSTLAAIILAAVAVYVV) traverse the membrane as a helical segment. An FAD-binding FR-type domain is found at 41–144 (DVFQKFPLIE…RGPKGFFTYT (104 aa)). Residues 124-139 (DSKSVGDHIEVRGPKG) and 150-182 (HLGMIAGGTGIAPMYQVLTAILTNPDDKTKISL) each bind FAD.

This sequence belongs to the flavoprotein pyridine nucleotide cytochrome reductase family. In terms of assembly, monomer. Component of the 2-(3-amino-3-carboxypropyl)histidine synthase complex composed of DPH1, DPH2, DPH3 and a NADH-dependent reductase, predominantly CBR1. FAD serves as cofactor.

The protein localises to the mitochondrion outer membrane. It catalyses the reaction 2 Fe(III)-[cytochrome b5] + NADH = 2 Fe(II)-[cytochrome b5] + NAD(+) + H(+). The catalysed reaction is 2 Fe(3+)-[Dph3] + NADH = 2 Fe(2+)-[Dph3] + NAD(+) + H(+). It participates in protein modification; peptidyl-diphthamide biosynthesis. Functionally, NADH-dependent reductase for DPH3 and cytochrome b5. Required for the first step of diphthamide biosynthesis, a post-translational modification of histidine which occurs in elongation factor 2. DPH1 and DPH2 transfer a 3-amino-3-carboxypropyl (ACP) group from S-adenosyl-L-methionine (SAM) to a histidine residue, the reaction is assisted by a reduction system comprising DPH3 and a NADH-dependent reductase, predominantly CBR1. By reducing DPH3, also involved in the formation of the tRNA wobble base modification mcm5s 2U (5-methoxycarbonylmethyl-2-thiouridine), mediated by the elongator complex. The cytochrome b5/NADH cytochrome b5 reductase electron transfer system supports the catalytic activity of several sterol biosynthetic enzymes. The sequence is that of NADH-cytochrome b5 reductase 1 (CBR1) from Meyerozyma guilliermondii (strain ATCC 6260 / CBS 566 / DSM 6381 / JCM 1539 / NBRC 10279 / NRRL Y-324) (Yeast).